Here is a 431-residue protein sequence, read N- to C-terminus: Glutamate-1-semialdehyde 2,1-aminomutase (431 aa).

Position 266 is an N6-(pyridoxal phosphate)lysine (K266).

It belongs to the class-III pyridoxal-phosphate-dependent aminotransferase family. HemL subfamily. Homodimer. Requires pyridoxal 5'-phosphate as cofactor.

The protein localises to the cytoplasm. It carries out the reaction (S)-4-amino-5-oxopentanoate = 5-aminolevulinate. It participates in porphyrin-containing compound metabolism; protoporphyrin-IX biosynthesis; 5-aminolevulinate from L-glutamyl-tRNA(Glu): step 2/2. This Wolinella succinogenes (strain ATCC 29543 / DSM 1740 / CCUG 13145 / JCM 31913 / LMG 7466 / NCTC 11488 / FDC 602W) (Vibrio succinogenes) protein is Glutamate-1-semialdehyde 2,1-aminomutase.